We begin with the raw amino-acid sequence, 298 residues long: Porphobilinogen deaminase (298 aa).

C239 bears the S-(dipyrrolylmethanemethyl)cysteine mark.

This sequence belongs to the HMBS family. In terms of assembly, monomer. Dipyrromethane serves as cofactor.

It catalyses the reaction 4 porphobilinogen + H2O = hydroxymethylbilane + 4 NH4(+). It participates in porphyrin-containing compound metabolism; protoporphyrin-IX biosynthesis; coproporphyrinogen-III from 5-aminolevulinate: step 2/4. Functionally, tetrapolymerization of the monopyrrole PBG into the hydroxymethylbilane pre-uroporphyrinogen in several discrete steps. The polypeptide is Porphobilinogen deaminase (Ehrlichia canis (strain Jake)).